Here is a 55-residue protein sequence, read N- to C-terminus: Large ribosomal subunit protein bL33 (55 aa).

The protein belongs to the bacterial ribosomal protein bL33 family.

This chain is Large ribosomal subunit protein bL33, found in Xanthomonas axonopodis pv. citri (strain 306).